The chain runs to 523 residues: MSQQVIIFDTTLRDGEQALQASLSAKEKLQIALALERMGVDVMEVGFPVSSPGDFESVQTIARTIKNSRVCALARCVEKDIDVAAQALKVADAFRIHTFIATSPMHIATKLRSTLDEVIERAVYMVKRARNYTDDVEFSCEDAGRTPVDDLARVVEAAINAGARTINIPDTVGYTMPFEFAGIISGLYERVPNIDKAIISVHTHDDLGIAVGNSLAAVHAGARQVEGAMNGIGERAGNCALEEVIMAIKVRKDIMNVHTNINHHEIWRTSQTVSQICNMPIPANKAIVGSGAFAHSSGIHQDGVLKNRENYEIMTPESIGLNQIQLNLTSRSGRAAVKHRMEEMGYKDTDYNMDHLYDAFLKLADKKGQVFDYDLEALAFINKQQEEPEHFRLDYFSVQSGSSDIATASVKLACGEEIKAEAANGNGPVDAIYQAINRLTGYDVELVKYDLNAKGQGKDALGQVDIVVNHHGRRFHGVGLATDIVESSAKAMVHVLNNIWRAAEVEKELQRKAQNKENNKETV.

The Pyruvate carboxyltransferase domain occupies 5-267 (VIIFDTTLRD…HTNINHHEIW (263 aa)). Mn(2+) contacts are provided by aspartate 14, histidine 202, histidine 204, and asparagine 238. The interval 392–523 (RLDYFSVQSG…QNKENNKETV (132 aa)) is regulatory domain.

Belongs to the alpha-IPM synthase/homocitrate synthase family. LeuA type 1 subfamily. Homodimer. Mn(2+) is required as a cofactor.

The protein localises to the cytoplasm. It catalyses the reaction 3-methyl-2-oxobutanoate + acetyl-CoA + H2O = (2S)-2-isopropylmalate + CoA + H(+). It participates in amino-acid biosynthesis; L-leucine biosynthesis; L-leucine from 3-methyl-2-oxobutanoate: step 1/4. Its function is as follows. Catalyzes the condensation of the acetyl group of acetyl-CoA with 3-methyl-2-oxobutanoate (2-ketoisovalerate) to form 3-carboxy-3-hydroxy-4-methylpentanoate (2-isopropylmalate). This chain is 2-isopropylmalate synthase, found in Salmonella agona (strain SL483).